Here is a 763-residue protein sequence, read N- to C-terminus: Photosystem I P700 chlorophyll a apoprotein A1 (763 aa).

Helical transmembrane passes span 72-95 (IFSA…FHGA), 158-181 (LYVT…FHYH), 197-221 (LNHH…HVSL), 305-323 (TAHH…GHMY), 360-383 (WHAQ…HHMY), 399-425 (LSLF…IFMV), 447-469 (AIIS…LYIH), and 544-562 (FMVH…LILL). [4Fe-4S] cluster is bound by residues Cys586 and Cys595. 2 helical membrane passes run 602–623 (HVFL…HYSW) and 677–699 (TSAY…MFLF). His688 contacts chlorophyll a'. The chlorophyll a site is built by Met696 and Tyr704. Trp705 lines the phylloquinone pocket. The helical transmembrane segment at 737–757 (AVGVAHYLLGGIVTTWSFFLA) threads the bilayer.

This sequence belongs to the PsaA/PsaB family. As to quaternary structure, the PsaA/B heterodimer binds the P700 chlorophyll special pair and subsequent electron acceptors. PSI consists of a core antenna complex that captures photons, and an electron transfer chain that converts photonic excitation into a charge separation. The cyanobacterial PSI reaction center is composed of one copy each of PsaA,B,C,D,E,F,I,J,K,L,M and X, and forms trimeric complexes. The cofactor is PSI electron transfer chain: 5 chlorophyll a, 1 chlorophyll a', 2 phylloquinones and 3 4Fe-4S clusters. PSI core antenna: 90 chlorophyll a, 22 carotenoids, 3 phospholipids and 1 galactolipid. P700 is a chlorophyll a/chlorophyll a' dimer, A0 is one or more chlorophyll a, A1 is one or both phylloquinones and FX is a shared 4Fe-4S iron-sulfur center..

It localises to the cellular thylakoid membrane. The catalysed reaction is reduced [plastocyanin] + hnu + oxidized [2Fe-2S]-[ferredoxin] = oxidized [plastocyanin] + reduced [2Fe-2S]-[ferredoxin]. In terms of biological role, psaA and PsaB bind P700, the primary electron donor of photosystem I (PSI), as well as the electron acceptors A0, A1 and FX. PSI is a plastocyanin/cytochrome c6-ferredoxin oxidoreductase, converting photonic excitation into a charge separation, which transfers an electron from the donor P700 chlorophyll pair to the spectroscopically characterized acceptors A0, A1, FX, FA and FB in turn. Oxidized P700 is reduced on the lumenal side of the thylakoid membrane by plastocyanin or cytochrome c6. The protein is Photosystem I P700 chlorophyll a apoprotein A1 of Synechococcus elongatus (strain ATCC 33912 / PCC 7942 / FACHB-805) (Anacystis nidulans R2).